Here is a 505-residue protein sequence, read N- to C-terminus: Folate transporter 1 (505 aa).

Helical transmembrane passes span 58–78, 89–109, 122–142, and 146–166; these read SLIAMLQGVEVLCNLSIIYLL, LSIVMCFIKIPWSIKLVWAVI, YYLLLGSFLCILSLICLGLIT, and LFITILLLFIYFFGSSLCNVI. Residues Asn177, Asn181, and Asn186 are each glycosylated (N-linked (GlcNAc...) asparagine). Helical transmembrane passes span 192–212 and 216–236; these read AFRKLSFAIMSYLSGYLLLLI and HIFLIGSFLPICVFTSGFFII. Residue Asn240 is glycosylated (N-linked (GlcNAc...) asparagine). Transmembrane regions (helical) follow at residues 266–286, 300–320, 326–346, 352–372, and 405–425; these read IIFIFIMMSTPSCGNTLFFYI, MAMFQSLASFISIISYMLFFT, KLLLYSTIIITPFCLLPLVVI, FLFIPNTLFFITDTVLIEFIA, and FASIISSFLSSLLTYSLNITS. N-linked (GlcNAc...) asparagine glycosylation occurs at Asn427. The helical transmembrane segment at 431–451 threads the bilayer; that stretch reads LPYMIIICCLTNIIPIFFLYI. N-linked (GlcNAc...) asparagine glycosylation is present at Asn454.

This sequence belongs to the major facilitator superfamily. Folate-biopterin transporter (TC 2.A.71) family.

It is found in the cell membrane. It catalyses the reaction folate(in) + H(+)(in) = folate(out) + H(+)(out). Transport of folates is inhibited by probenecid and methotrexate. Folate transporter with broad substrate specificity. Transports folic acid, folinic acid, pteroic acid, dihydropteroic acid, the folate precursor p-amino benzoic acid (pABA) and the human folate catabolite pABA monoglutamate. This is Folate transporter 1 from Plasmodium falciparum (isolate 3D7).